The primary structure comprises 320 residues: Aspartate carbamoyltransferase catalytic subunit (320 aa).

Arg-53 and Thr-54 together coordinate carbamoyl phosphate. Residue Lys-82 participates in L-aspartate binding. The carbamoyl phosphate site is built by Arg-103, His-131, and Gln-134. The L-aspartate site is built by Arg-164 and Arg-227. Residues Leu-266 and Pro-267 each contribute to the carbamoyl phosphate site.

Belongs to the aspartate/ornithine carbamoyltransferase superfamily. ATCase family. In terms of assembly, heterododecamer (2C3:3R2) of six catalytic PyrB chains organized as two trimers (C3), and six regulatory PyrI chains organized as three dimers (R2).

It catalyses the reaction carbamoyl phosphate + L-aspartate = N-carbamoyl-L-aspartate + phosphate + H(+). It participates in pyrimidine metabolism; UMP biosynthesis via de novo pathway; (S)-dihydroorotate from bicarbonate: step 2/3. In terms of biological role, catalyzes the condensation of carbamoyl phosphate and aspartate to form carbamoyl aspartate and inorganic phosphate, the committed step in the de novo pyrimidine nucleotide biosynthesis pathway. This chain is Aspartate carbamoyltransferase catalytic subunit, found in Bifidobacterium longum subsp. infantis (strain ATCC 15697 / DSM 20088 / JCM 1222 / NCTC 11817 / S12).